The primary structure comprises 460 residues: Argininosuccinate lyase (460 aa).

It belongs to the lyase 1 family. Argininosuccinate lyase subfamily.

It is found in the cytoplasm. The catalysed reaction is 2-(N(omega)-L-arginino)succinate = fumarate + L-arginine. Its pathway is amino-acid biosynthesis; L-arginine biosynthesis; L-arginine from L-ornithine and carbamoyl phosphate: step 3/3. The chain is Argininosuccinate lyase from Solibacter usitatus (strain Ellin6076).